Here is a 604-residue protein sequence, read N- to C-terminus: Glutamyl-tRNA(Gln) amidotransferase subunit B, mitochondrial (604 aa).

A mitochondrion-targeting transit peptide spans 1–48 (MIRQCLSRRGAYSRYRLAARGVELAEPFHHQSSRPQGRRNWSSSPRCS). The segment at 28–57 (FHHQSSRPQGRRNWSSSPRCSLDIRTDTPR) is disordered. Polar residues predominate over residues 33-46 (SRPQGRRNWSSSPR).

Belongs to the GatB/GatE family. GatB subfamily. As to quaternary structure, subunit of the heterotrimeric GatCAB amidotransferase (AdT) complex, composed of A, B and C subunits.

It is found in the mitochondrion. It carries out the reaction L-glutamyl-tRNA(Gln) + L-glutamine + ATP + H2O = L-glutaminyl-tRNA(Gln) + L-glutamate + ADP + phosphate + H(+). In terms of biological role, allows the formation of correctly charged Gln-tRNA(Gln) through the transamidation of misacylated Glu-tRNA(Gln) in the mitochondria. The reaction takes place in the presence of glutamine and ATP through an activated gamma-phospho-Glu-tRNA(Gln). The polypeptide is Glutamyl-tRNA(Gln) amidotransferase subunit B, mitochondrial (Ajellomyces dermatitidis (strain ER-3 / ATCC MYA-2586) (Blastomyces dermatitidis)).